A 413-amino-acid polypeptide reads, in one-letter code: Aspartate aminotransferase, cytoplasmic (413 aa).

Positions 39 and 141 each coordinate L-aspartate. The residue at position 149 (serine 149) is a Phosphoserine. Asparagine 195 provides a ligand contact to L-aspartate. Lysine 259 is subject to N6-(pyridoxal phosphate)lysine. Arginine 387 contacts L-aspartate.

The protein belongs to the class-I pyridoxal-phosphate-dependent aminotransferase family. Homodimer. It depends on pyridoxal 5'-phosphate as a cofactor.

The protein resides in the cytoplasm. It catalyses the reaction L-aspartate + 2-oxoglutarate = oxaloacetate + L-glutamate. The catalysed reaction is L-cysteine + 2-oxoglutarate = 2-oxo-3-sulfanylpropanoate + L-glutamate. It carries out the reaction (2S)-2-aminobutanoate + 2-oxoglutarate = 2-oxobutanoate + L-glutamate. The enzyme catalyses 3-sulfino-L-alanine + 2-oxoglutarate = 3-sulfinopyruvate + L-glutamate. Functionally, biosynthesis of L-glutamate from L-aspartate or L-cysteine. Important regulator of levels of glutamate, the major excitatory neurotransmitter of the vertebrate central nervous system. Acts as a scavenger of glutamate in brain neuroprotection. The aspartate aminotransferase activity is involved in hepatic glucose synthesis during development and in adipocyte glyceroneogenesis. Using L-cysteine as substrate, regulates levels of mercaptopyruvate, an important source of hydrogen sulfide. Mercaptopyruvate is converted into H(2)S via the action of 3-mercaptopyruvate sulfurtransferase (3MST). Hydrogen sulfide is an important synaptic modulator and neuroprotectant in the brain. This chain is Aspartate aminotransferase, cytoplasmic, found in Macaca fascicularis (Crab-eating macaque).